The chain runs to 174 residues: Cytochrome c-type biogenesis protein CcmE (174 aa).

The Cytoplasmic segment spans residues 1 to 7; it reads MTRKSRR. The chain crosses the membrane as a helical; Signal-anchor for type II membrane protein span at residues 8-28; that stretch reads LILIGAGLGVLALAAGLILTA. At 29–174 the chain is on the periplasmic side; it reads LNDTIVFFRT…PAVSPARSTP (146 aa). Heme-binding residues include His-121 and Tyr-125. A compositionally biased stretch (basic and acidic residues) spans 130-144; that stretch reads VADALKKSGHWKEGE. The segment at 130–174 is disordered; that stretch reads VADALKKSGHWKEGEEGGPVPPAAKTPGPQSSAAPPAVSPARSTP. Low complexity predominate over residues 156–174; it reads PGPQSSAAPPAVSPARSTP.

It belongs to the CcmE/CycJ family.

The protein resides in the cell inner membrane. Heme chaperone required for the biogenesis of c-type cytochromes. Transiently binds heme delivered by CcmC and transfers the heme to apo-cytochromes in a process facilitated by CcmF and CcmH. The chain is Cytochrome c-type biogenesis protein CcmE from Azorhizobium caulinodans (strain ATCC 43989 / DSM 5975 / JCM 20966 / LMG 6465 / NBRC 14845 / NCIMB 13405 / ORS 571).